The primary structure comprises 110 residues: Nucleoid-associated protein bbp_426 (110 aa).

The protein belongs to the YbaB/EbfC family. Homodimer.

The protein localises to the cytoplasm. It localises to the nucleoid. Binds to DNA and alters its conformation. May be involved in regulation of gene expression, nucleoid organization and DNA protection. This chain is Nucleoid-associated protein bbp_426, found in Buchnera aphidicola subsp. Baizongia pistaciae (strain Bp).